The following is a 298-amino-acid chain: 5'-AMP-activated protein kinase subunit beta (298 aa).

The interval 1–98 (MGNVQSQEGE…KTHQPYSGPC (98 aa)) is disordered. The span at 19-30 (QDATTTPDNANN) shows a compositional bias: polar residues. The span at 48 to 59 (LNQEGEMSDDNQ) shows a compositional bias: acidic residues. Polar residues predominate over residues 60–77 (QEGGNNRTSQNGTSGSSG). Positions 78 to 91 (HTKRRSQTSGKKTH) are enriched in basic residues. 250-252 (DQS) is a binding site for ADP.

This sequence belongs to the 5'-AMP-activated protein kinase beta subunit family. In terms of assembly, AMPK is a heterotrimer of an alpha catalytic subunit (ssp2), a beta (amk2) and a gamma non-catalytic subunits (cbs2). The beta subunit serves as a bridge between the catalytic and the regulatory subunit.

It localises to the cytoplasm. In terms of biological role, beta subunit of AMP-activated protein kinase (AMPK), which is required for transcriptional, metabolic, and developmental adaptations in response to glucose limitation. Has a structural role, mediating heterotrimer formation, and a regulatory role, defining carbon source-regulated subcellular location and substrate specificity of the AMPK kinase complex. The sequence is that of 5'-AMP-activated protein kinase subunit beta (amk2) from Schizosaccharomyces pombe (strain 972 / ATCC 24843) (Fission yeast).